A 564-amino-acid chain; its full sequence is Esterase FE4 (564 aa).

An N-terminal signal peptide occupies residues 1–23 (MKNTCGILLNLFLFIGCFLTCSA). N-linked (GlcNAc...) asparagine glycosylation occurs at Asn-81. Cys-89 and Cys-106 are oxidised to a cystine. Ser-214 (acyl-ester intermediate) is an active-site residue. A disulfide bridge connects residues Cys-266 and Cys-277. The N-linked (GlcNAc...) asparagine glycan is linked to Asn-269. The active-site Charge relay system is Glu-339. N-linked (GlcNAc...) asparagine glycans are attached at residues Asn-371, Asn-404, and Asn-443. Residue His-463 is the Charge relay system of the active site.

Belongs to the type-B carboxylesterase/lipase family.

The catalysed reaction is a carboxylic ester + H2O = an alcohol + a carboxylate + H(+). In terms of biological role, overproduction of nonspecific esterases is a common mechanism of resistance to organophosphate insecticides. In Myzus persicae (Green peach aphid), this protein is Esterase FE4.